Reading from the N-terminus, the 355-residue chain is 3-isopropylmalate dehydrogenase (355 aa).

Positions 98, 108, 132, and 223 each coordinate substrate. 3 residues coordinate Mg(2+): Asp-223, Asp-247, and Asp-251. 283–295 (GSAPDIAGQQKAD) lines the NAD(+) pocket.

Belongs to the isocitrate and isopropylmalate dehydrogenases family. LeuB type 2 subfamily. In terms of assembly, homodimer. The cofactor is Mg(2+). It depends on Mn(2+) as a cofactor.

It localises to the cytoplasm. It catalyses the reaction (2R,3S)-3-isopropylmalate + NAD(+) = 4-methyl-2-oxopentanoate + CO2 + NADH. Its pathway is amino-acid biosynthesis; L-leucine biosynthesis; L-leucine from 3-methyl-2-oxobutanoate: step 3/4. Its function is as follows. Catalyzes the oxidation of 3-carboxy-2-hydroxy-4-methylpentanoate (3-isopropylmalate) to 3-carboxy-4-methyl-2-oxopentanoate. The product decarboxylates to 4-methyl-2 oxopentanoate. The protein is 3-isopropylmalate dehydrogenase of Clavibacter sepedonicus (Clavibacter michiganensis subsp. sepedonicus).